Consider the following 236-residue polypeptide: uncharacterized protein (236 aa).

The segment at 186–236 (HGRGDTRNLNDITGLGHERERDRENTHYEKKPKLDSDSEVDIRSFRQDMDL) is disordered. Residues 201-236 (GHERERDRENTHYEKKPKLDSDSEVDIRSFRQDMDL) show a composition bias toward basic and acidic residues. Phosphoserine is present on serine 221.

This is an uncharacterized protein from Saccharomyces cerevisiae (strain ATCC 204508 / S288c) (Baker's yeast).